The following is a 183-amino-acid chain: Chromophore lyase CpcT/CpeT 4 (183 aa).

It belongs to the CpcT/CpeT biliprotein lyase family.

Functionally, covalently attaches a chromophore to Cys residue(s) of phycobiliproteins. The polypeptide is Chromophore lyase CpcT/CpeT 4 (Gloeobacter violaceus (strain ATCC 29082 / PCC 7421)).